Here is a 1347-residue protein sequence, read N- to C-terminus: MDSEDDPLLQDVWLEEEQPEDEACRGIPGPGLQSGAQGCWRRWTLPSRPPTLGFWSTLGWAFTNPCCAGLVLFLGCSIPMVLSAFMFLYYPPLDIDISYNAFEIRNHEASQRFDALALALKSQFGSWGRNRRDLADFTSETLQRLISEQLQQLHLGNHSRPASRAPRSAPRDTVATQTSAANSSERRRREAPSPEGQVTNQSRARRGASRWDYSRTYVSANTQTHAHWRIELIFLARGDAERNIFTSERLVTIHEIERKIMDHPGFREFCWKPHEVLKDLPLGSYSYCSPPSSLMTYFFPTERGGKIYYDGMGQDLADIRGSLELAMTHPEFYWYVDEGLSVDNLKSSLLRSEILFGAPLPNYYSVDDRWEEQRAKFQSFVVTYVAMLAKQSTSKVQVLYGGTDLFDYEVRRTFNNDMLLAFISSSCIAALVYILTSCSVFLSFFGIASIGLSCLVALFLYHVVFGIQYLGILNGVAAFVIVGIGVDDVFVFINTYRQATHLEDPQLRMIHTIQTAGKATFFTSLTTAAAYAANVFSQIPAVHDFGLFMSLIVTCCWLAVLFTMPAALGLWSLYMAPLESSCQNSCHQKCGRKSSLHFPGDLFTAPERAGGGPAQGPLPYLDDDIPLLNVEDEPASLELGDVSLVSVHCEGLQPTPDANSRGQLLAQLQELLHHWVLWAAVKSRWVIVGLFASILILSLVFASRLRPASRAPLLFRPDTNIQVLLDLKYNLSAEGISCITCSGLFQEKPHSLQNNVRTSLEKKKRGSGVSWASRTETTAQESMSTVYISKVKSKGHPAVYRLSLNASLPAPWQAVSPGDGEVPSFQVYRAPFGDFTKKLTACMSTVGLLQAASPSRKWMVTALACDARRGWKFDFSFYVATKEQQHTRKLYFAQSHKPPFHGRLCVAPPGCLLSSSPDGPTKGFFYVPSDKVPKARISATFGFNPCVNTGCGKPAVRPLVDTGAMVFVVFGIIGLNRTQQMDNHVIGDPGSVIYDSSFDLFKEIGHLCRLCKAIAGNSELVKPGGAQCLPSGYSISSFLQMLHPECKELPEPNLLPGQLSHGAVGVKEGRVQWISMAFESTTYKGKSSFQTYSDYLRWESFLRQQLQTFPEGSALHRGFQTCEHWKQIFMEIIGVQSALYGLVLSLLICVAAVAVFTTHVLLLLPVLLSILGIVCLVVTIMYWSGWEMGAVEAISLSILVGSSVDYCVHLVEGYLLAGENLPPQLSQDPSSQRQWRTLEAVRHVGVAIVSSALTTVIATVPLFFCIIAPFAKFGKIVALNTGVSILYTLTVSTALLGIMAPGSFTRTRTSFLKALGAVLLAGALGLGACLVLLRSGYKIPLPSGATL.

The Cytoplasmic portion of the chain corresponds to 1–67; it reads MDSEDDPLLQ…LGWAFTNPCC (67 aa). A helical membrane pass occupies residues 68–88; the sequence is AGLVLFLGCSIPMVLSAFMFL. Residues 89 to 417 lie on the Lumenal side of the membrane; it reads YYPPLDIDIS…YEVRRTFNND (329 aa). A disordered region spans residues 156-207; it reads GNHSRPASRAPRSAPRDTVATQTSAANSSERRRREAPSPEGQVTNQSRARRG. Asparagine 157 carries an N-linked (GlcNAc...) asparagine glycan. Over residues 159–168 the composition is skewed to low complexity; it reads SRPASRAPRS. An SSD domain is found at 412 to 570; that stretch reads RTFNNDMLLA…LFTMPAALGL (159 aa). Residues 418 to 438 traverse the membrane as a helical segment; it reads MLLAFISSSCIAALVYILTSC. Position 439 (serine 439) is a topological domain, cytoplasmic. A helical transmembrane segment spans residues 440–460; that stretch reads VFLSFFGIASIGLSCLVALFL. The Lumenal portion of the chain corresponds to 461–463; sequence YHV. A helical transmembrane segment spans residues 464 to 484; sequence VFGIQYLGILNGVAAFVIVGI. At 485 to 528 the chain is on the cytoplasmic side; the sequence is GVDDVFVFINTYRQATHLEDPQLRMIHTIQTAGKATFFTSLTTA. Residues 529–549 traverse the membrane as a helical segment; it reads AAYAANVFSQIPAVHDFGLFM. Residue serine 550 is a topological domain, lumenal. A helical transmembrane segment spans residues 551–571; that stretch reads LIVTCCWLAVLFTMPAALGLW. At 572–684 the chain is on the cytoplasmic side; the sequence is SLYMAPLESS…WVLWAAVKSR (113 aa). The helical transmembrane segment at 685–705 threads the bilayer; sequence WVIVGLFASILILSLVFASRL. Residues 706 to 1137 are Lumenal-facing; sequence RPASRAPLLF…IFMEIIGVQS (432 aa). Asparagine 976 carries an N-linked (GlcNAc...) asparagine glycan. Residues 1138–1158 form a helical membrane-spanning segment; it reads ALYGLVLSLLICVAAVAVFTT. Residue histidine 1159 is a topological domain, cytoplasmic. A helical transmembrane segment spans residues 1160-1180; it reads VLLLLPVLLSILGIVCLVVTI. Residues 1181–1246 are Lumenal-facing; sequence MYWSGWEMGA…TLEAVRHVGV (66 aa). The chain crosses the membrane as a helical span at residues 1247-1267; that stretch reads AIVSSALTTVIATVPLFFCII. The Cytoplasmic portion of the chain corresponds to 1268 to 1281; the sequence is APFAKFGKIVALNT. Residues 1282-1302 form a helical membrane-spanning segment; that stretch reads GVSILYTLTVSTALLGIMAPG. Over 1303–1310 the chain is Lumenal; that stretch reads SFTRTRTS. A helical membrane pass occupies residues 1311–1331; sequence FLKALGAVLLAGALGLGACLV. Topologically, residues 1332–1347 are cytoplasmic; it reads LLRSGYKIPLPSGATL.

Belongs to the patched family. Expressed in brain, retina, testis and thymus.

Its subcellular location is the endoplasmic reticulum membrane. The protein localises to the nucleus membrane. It is found in the cytoplasmic vesicle membrane. Functionally, plays a role in neuronal proliferation and differentiation. Plays a role in the accumulation of cellular cholesterol. Involved in intracellular lipid droplet formation. May contribute to cholesterol homeostasis in neuronal cells. This Mus musculus (Mouse) protein is Protein dispatched homolog 3.